The primary structure comprises 131 residues: D-ribose pyranase (131 aa).

His20 serves as the catalytic Proton donor. Residues Asp28, His98, and 120-122 (FSN) each bind substrate.

The protein belongs to the RbsD / FucU family. RbsD subfamily. Homodecamer.

The protein resides in the cytoplasm. It catalyses the reaction beta-D-ribopyranose = beta-D-ribofuranose. Its pathway is carbohydrate metabolism; D-ribose degradation; D-ribose 5-phosphate from beta-D-ribopyranose: step 1/2. Catalyzes the interconversion of beta-pyran and beta-furan forms of D-ribose. This Petrotoga mobilis (strain DSM 10674 / SJ95) protein is D-ribose pyranase.